Here is a 468-residue protein sequence, read N- to C-terminus: MSVVTRFAPSPTGYLHVGGARTALYSWLVAKAQGGEFVLRIEDTDRERSTQPAIDAILEGMEWLGLSWDRGPYYQTQRFERYQELIDKLLEEDKAYKCYCSTERLEKMREEQMAAGEKPRYDGHCRDNPNVGGDKYVIRFRNPQDGSVVFDDHIRGRIEFANTELDDLIIARTDGTPTYNFCVVVDDWDMDITHVVRGEDHINNTPRQINILKALGAPVPQYAHVSMILGDDGKKLSKRHGAVSVMQYRDDGYVPEAVVNYLARLGWSHGDQEIFSRDELVEYFKLDDVNKAASAFNTEKLNWLNQHYMKTLPAEQVAPQLQWQFDQIGVDTSNGPALEQVVSLQADRVKTLKEMAAISRYFFESFDEFDEKAAKKHLRPVAKEPLVKAKELLGAISDWNAANIQAAINQTAADLDVGMGKVGMPLRVAATGGGNSPSLDVTLELIPQQTVLARIDLALEFIANRENA.

The short motif at 9 to 19 (PSPTGYLHVGG) is the 'HIGH' region element. 4 residues coordinate Zn(2+): cysteine 98, cysteine 100, cysteine 125, and aspartate 127. The 'KMSKS' region motif lies at 235 to 239 (KLSKR). Lysine 238 contributes to the ATP binding site.

Belongs to the class-I aminoacyl-tRNA synthetase family. Glutamate--tRNA ligase type 1 subfamily. In terms of assembly, monomer. Zn(2+) is required as a cofactor.

The protein resides in the cytoplasm. It catalyses the reaction tRNA(Glu) + L-glutamate + ATP = L-glutamyl-tRNA(Glu) + AMP + diphosphate. Functionally, catalyzes the attachment of glutamate to tRNA(Glu) in a two-step reaction: glutamate is first activated by ATP to form Glu-AMP and then transferred to the acceptor end of tRNA(Glu). This is Glutamate--tRNA ligase from Idiomarina loihiensis (strain ATCC BAA-735 / DSM 15497 / L2-TR).